Consider the following 623-residue polypeptide: Chaperone protein dnaK (623 aa).

The disordered stretch occupies residues 598-623 (TPDAGAEGGAAPSQDDAIETDFSTEK).

This sequence belongs to the heat shock protein 70 family.

The protein resides in the plastid. It is found in the chloroplast. Functionally, acts as a chaperone. This chain is Chaperone protein dnaK, found in Emiliania huxleyi (Coccolithophore).